A 130-amino-acid chain; its full sequence is Protein ApaG (130 aa).

Positions 3–127 (RALTRDIEVT…FSLDSPGLMR (125 aa)) constitute an ApaG domain.

The sequence is that of Protein ApaG from Agrobacterium fabrum (strain C58 / ATCC 33970) (Agrobacterium tumefaciens (strain C58)).